Consider the following 253-residue polypeptide: Probable U3 small nucleolar RNA-associated protein 11 (253 aa).

The segment at 1–26 is disordered; sequence MAAAFRKAAKSRQREHRERSQPGFRK. Glycyl lysine isopeptide (Lys-Gly) (interchain with G-Cter in SUMO2) cross-links involve residues Lys74, Lys83, and Lys86. Position 90 is a phosphothreonine (Thr90). Residues Lys103, Lys120, Lys143, Lys144, Lys180, Lys211, Lys218, Lys235, and Lys236 each participate in a glycyl lysine isopeptide (Lys-Gly) (interchain with G-Cter in SUMO2) cross-link. Ser241 carries the phosphoserine modification. A Glycyl lysine isopeptide (Lys-Gly) (interchain with G-Cter in SUMO2) cross-link involves residue Lys246.

It belongs to the UTP11 family. Part of the small subunit (SSU) processome, composed of more than 70 proteins and the RNA chaperone small nucleolar RNA (snoRNA) U3.

The protein localises to the nucleus. Its subcellular location is the nucleolus. Functionally, part of the small subunit (SSU) processome, first precursor of the small eukaryotic ribosomal subunit. During the assembly of the SSU processome in the nucleolus, many ribosome biogenesis factors, an RNA chaperone and ribosomal proteins associate with the nascent pre-rRNA and work in concert to generate RNA folding, modifications, rearrangements and cleavage as well as targeted degradation of pre-ribosomal RNA by the RNA exosome. Involved in nucleolar processing of pre-18S ribosomal RNA. The sequence is that of Probable U3 small nucleolar RNA-associated protein 11 from Homo sapiens (Human).